The following is an 82-amino-acid chain: Small ribosomal subunit protein bS18 (82 aa).

Residues 1-25 are disordered; the sequence is MADTSSSQARRPFHRRRKTCPFSGA.

It belongs to the bacterial ribosomal protein bS18 family. As to quaternary structure, part of the 30S ribosomal subunit. Forms a tight heterodimer with protein bS6.

Functionally, binds as a heterodimer with protein bS6 to the central domain of the 16S rRNA, where it helps stabilize the platform of the 30S subunit. The chain is Small ribosomal subunit protein bS18 from Agrobacterium fabrum (strain C58 / ATCC 33970) (Agrobacterium tumefaciens (strain C58)).